A 421-amino-acid chain; its full sequence is Cytochrome c biogenesis protein Ccs1 (421 aa).

3 consecutive transmembrane segments (helical) span residues 12–32, 71–91, and 157–177; these read LRFA…GTVI, TWWF…CTIL, and IAPI…IFGA.

Belongs to the Ccs1/CcsB family. As to quaternary structure, may interact with CcsA.

It localises to the plastid. Its subcellular location is the chloroplast thylakoid membrane. Functionally, required during biogenesis of c-type cytochromes (cytochrome c6 and cytochrome f) at the step of heme attachment. The chain is Cytochrome c biogenesis protein Ccs1 from Trieres chinensis (Marine centric diatom).